The chain runs to 660 residues: Bifunctional polymyxin resistance protein ArnA (660 aa).

A formyltransferase ArnAFT region spans residues 1-304 (MKAVIFAYHD…TLGLVAGARL (304 aa)). Residue histidine 104 is the Proton donor; for formyltransferase activity of the active site. Residues arginine 114 and 136–140 (VKRAD) contribute to the (6R)-10-formyltetrahydrofolate site. The dehydrogenase ArnADH stretch occupies residues 314 to 660 (RRIRVLILGV…RSVDVAERAS (347 aa)). NAD(+) contacts are provided by residues aspartate 347 and 368-369 (DI). Residues alanine 393, tyrosine 398, and 432–433 (TS) contribute to the UDP-alpha-D-glucuronate site. The active-site Proton acceptor; for decarboxylase activity is the glutamate 434. UDP-alpha-D-glucuronate contacts are provided by residues arginine 460, asparagine 492, 526 to 535 (KLIDGGQQKR), and tyrosine 613. Arginine 619 serves as the catalytic Proton donor; for decarboxylase activity.

It in the N-terminal section; belongs to the Fmt family. UDP-L-Ara4N formyltransferase subfamily. This sequence in the C-terminal section; belongs to the NAD(P)-dependent epimerase/dehydratase family. UDP-glucuronic acid decarboxylase subfamily. Homohexamer, formed by a dimer of trimers.

It carries out the reaction UDP-alpha-D-glucuronate + NAD(+) = UDP-beta-L-threo-pentopyranos-4-ulose + CO2 + NADH. The catalysed reaction is UDP-4-amino-4-deoxy-beta-L-arabinose + (6R)-10-formyltetrahydrofolate = UDP-4-deoxy-4-formamido-beta-L-arabinose + (6S)-5,6,7,8-tetrahydrofolate + H(+). Its pathway is nucleotide-sugar biosynthesis; UDP-4-deoxy-4-formamido-beta-L-arabinose biosynthesis; UDP-4-deoxy-4-formamido-beta-L-arabinose from UDP-alpha-D-glucuronate: step 1/3. It functions in the pathway nucleotide-sugar biosynthesis; UDP-4-deoxy-4-formamido-beta-L-arabinose biosynthesis; UDP-4-deoxy-4-formamido-beta-L-arabinose from UDP-alpha-D-glucuronate: step 3/3. The protein operates within bacterial outer membrane biogenesis; lipopolysaccharide biosynthesis. In terms of biological role, bifunctional enzyme that catalyzes the oxidative decarboxylation of UDP-glucuronic acid (UDP-GlcUA) to UDP-4-keto-arabinose (UDP-Ara4O) and the addition of a formyl group to UDP-4-amino-4-deoxy-L-arabinose (UDP-L-Ara4N) to form UDP-L-4-formamido-arabinose (UDP-L-Ara4FN). The modified arabinose is attached to lipid A and is required for resistance to polymyxin and cationic antimicrobial peptides. This chain is Bifunctional polymyxin resistance protein ArnA, found in Salmonella enteritidis PT4 (strain P125109).